The chain runs to 217 residues: Membrane-spanning 4-domains subfamily A member 6C (217 aa).

Residues 1–20 (MIPQVVTNETITTISPNGIN) are compositionally biased toward polar residues. Positions 1–33 (MIPQVVTNETITTISPNGINFPQKDESQPTQQR) are disordered. Over 1 to 46 (MIPQVVTNETITTISPNGINFPQKDESQPTQQRQDSLKKHLKAEIK) the chain is Cytoplasmic. The helical transmembrane segment at 47 to 67 (VIVAIQIMCAVTVLALGIILA) threads the bilayer. Residues 68–84 (SVPPVPYFNSVFSVLLK) lie on the Extracellular side of the membrane. Residues 85-105 (SGYPFIGALFFIASGILSIIT) form a helical membrane-spanning segment. Residues 106–121 (ERKSTKPLVDASLTLN) lie on the Cytoplasmic side of the membrane. Residues 122–142 (ILSVSFAFVGIIIISVSLAGL) traverse the membrane as a helical segment. Topologically, residues 143–186 (HPASEQCKQSKELSLIEHDYYQPFYNSDRSECAVTKSILTGALS) are extracellular. The chain crosses the membrane as a helical span at residues 187 to 207 (VMLIISVLELGLALLSAMLWL). Residues 208–217 (REGVLTSLRM) lie on the Cytoplasmic side of the membrane.

It belongs to the MS4A family. In terms of tissue distribution, expressed only by thymus, spleen, peripheral lymph node and bone marrow.

Its subcellular location is the membrane. May be involved in signal transduction as a component of a multimeric receptor complex. This is Membrane-spanning 4-domains subfamily A member 6C (Ms4a6c) from Mus musculus (Mouse).